The sequence spans 196 residues: Putative NADH dehydrogenase/NAD(P)H nitroreductase PST_3601 (196 aa).

The protein belongs to the nitroreductase family. HadB/RutE subfamily. FMN is required as a cofactor.

The polypeptide is Putative NADH dehydrogenase/NAD(P)H nitroreductase PST_3601 (Stutzerimonas stutzeri (strain A1501) (Pseudomonas stutzeri)).